A 251-amino-acid polypeptide reads, in one-letter code: Insertion sequence IS5376 putative ATP-binding protein (251 aa).

105–112 (GPPGIGKT) contributes to the ATP binding site.

Belongs to the IS21/IS1162 putative ATP-binding protein family.

In Geobacillus stearothermophilus (Bacillus stearothermophilus), this protein is Insertion sequence IS5376 putative ATP-binding protein.